The chain runs to 667 residues: tRNA 5-methylaminomethyl-2-thiouridine biosynthesis bifunctional protein MnmC (667 aa).

The segment covering 1–12 (MSKQQAPNTTGI) has biased composition (polar residues). A disordered region spans residues 1-20 (MSKQQAPNTTGIGTADLQWH). The segment at 1 to 240 (MSKQQAPNTT…KRECLRGVLE (240 aa)) is tRNA (mnm(5)s(2)U34)-methyltransferase. The tract at residues 268 to 667 (IGAGIAGAAC…LVRSLKKPPL (400 aa)) is FAD-dependent cmnm(5)s(2)U34 oxidoreductase.

This sequence in the N-terminal section; belongs to the methyltransferase superfamily. tRNA (mnm(5)s(2)U34)-methyltransferase family. It in the C-terminal section; belongs to the DAO family. The cofactor is FAD.

It is found in the cytoplasm. The catalysed reaction is 5-aminomethyl-2-thiouridine(34) in tRNA + S-adenosyl-L-methionine = 5-methylaminomethyl-2-thiouridine(34) in tRNA + S-adenosyl-L-homocysteine + H(+). In terms of biological role, catalyzes the last two steps in the biosynthesis of 5-methylaminomethyl-2-thiouridine (mnm(5)s(2)U) at the wobble position (U34) in tRNA. Catalyzes the FAD-dependent demodification of cmnm(5)s(2)U34 to nm(5)s(2)U34, followed by the transfer of a methyl group from S-adenosyl-L-methionine to nm(5)s(2)U34, to form mnm(5)s(2)U34. The sequence is that of tRNA 5-methylaminomethyl-2-thiouridine biosynthesis bifunctional protein MnmC from Magnetococcus marinus (strain ATCC BAA-1437 / JCM 17883 / MC-1).